A 44-amino-acid polypeptide reads, in one-letter code: Photosystem I reaction center subunit IX (44 aa).

Residues 7–27 (YLSVAPVISTLWFGSLAGLLI) form a helical membrane-spanning segment.

It belongs to the PsaJ family.

The protein localises to the plastid. Its subcellular location is the chloroplast thylakoid membrane. Functionally, may help in the organization of the PsaE and PsaF subunits. The polypeptide is Photosystem I reaction center subunit IX (Populus alba (White poplar)).